Reading from the N-terminus, the 430-residue chain is MEKYDLLIKNVLIPEKEGEWDIAVKDGKIEKIGKNIVGEAKYTINGKGKIAFPSFANMHTHISMTLLRGLGADLPLHDWLQKVIWPLEGEFVSPEFVKDGALLGIVESIRSGTTLFMDMYFFEEAVAEACEDVGIRAGLGFGILDFPTKVAKTPEEYIQRARKFAEEFKNRELVFPVICPHAPYTCSPNTLRMAKELADEYGLLLHIHVAETKEEVERIKEQYGKTPVEHLESIGFLDKNVLCAHMVWTTEKEREILKERDVKIAHCPESNLKLASGIAPVPDYVKRGITVTLGTDGAASNDNLNMLEETSTCAKFHKGYNLDAKAIDAGTALKIATENGFKVAGIKAGKVEEGYEADLILVDTDFPEFQPLYDPISQFVYSANSECIDTVICKGKVLMEKRELKTVDQEEIFAKARKWREKILSKLSSL.

Zn(2+) contacts are provided by His59 and His61. Substrate contacts are provided by Glu88 and His181. Position 208 (His208) interacts with Zn(2+). The substrate site is built by Glu211 and Asp296. Asp296 serves as a coordination point for Zn(2+).

Belongs to the metallo-dependent hydrolases superfamily. MTA/SAH deaminase family. Zn(2+) is required as a cofactor.

It carries out the reaction S-adenosyl-L-homocysteine + H2O + H(+) = S-inosyl-L-homocysteine + NH4(+). The enzyme catalyses S-methyl-5'-thioadenosine + H2O + H(+) = S-methyl-5'-thioinosine + NH4(+). Functionally, catalyzes the deamination of 5-methylthioadenosine and S-adenosyl-L-homocysteine into 5-methylthioinosine and S-inosyl-L-homocysteine, respectively. Is also able to deaminate adenosine. In Aquifex aeolicus (strain VF5), this protein is 5-methylthioadenosine/S-adenosylhomocysteine deaminase.